A 298-amino-acid chain; its full sequence is Tryptophan 2,3-dioxygenase (298 aa).

Residues 51-55 (FIIQH), tyrosine 113, and arginine 117 contribute to the substrate site. Histidine 240 lines the heme pocket. Threonine 254 serves as a coordination point for substrate.

The protein belongs to the tryptophan 2,3-dioxygenase family. Homotetramer. The cofactor is heme.

The catalysed reaction is L-tryptophan + O2 = N-formyl-L-kynurenine. The protein operates within amino-acid degradation; L-tryptophan degradation via kynurenine pathway; L-kynurenine from L-tryptophan: step 1/2. Functionally, heme-dependent dioxygenase that catalyzes the oxidative cleavage of the L-tryptophan (L-Trp) pyrrole ring and converts L-tryptophan to N-formyl-L-kynurenine. Catalyzes the oxidative cleavage of the indole moiety. The chain is Tryptophan 2,3-dioxygenase from Xanthomonas euvesicatoria pv. vesicatoria (strain 85-10) (Xanthomonas campestris pv. vesicatoria).